The sequence spans 495 residues: ATP-dependent RNA helicase dbp3 (495 aa).

Basic and acidic residues predominate over residues 1-14; that stretch reads MAKRELQDKGSTEH. A disordered region spans residues 1 to 49; that stretch reads MAKRELQDKGSTEHRAKKKSRNEKHTKKAEDSQASAQSSETQYTDPKEP. Over residues 15 to 27 the composition is skewed to basic residues; the sequence is RAKKKSRNEKHTK. A Q motif motif is present at residues 97 to 105; that stretch reads SFTSPTAIQ. In terms of domain architecture, Helicase ATP-binding spans 109–284; it reads WPFLFSGRDV…ATFMTSPVTV (176 aa). ATP is bound at residue 122 to 129; the sequence is AETGSGKT. The DEAD box motif lies at 231–234; that stretch reads DEAD. The region spanning 315 to 464 is the Helicase C-terminal domain; sequence RLVQLLNKYQ…DVPEDLLKFG (150 aa).

This sequence belongs to the DEAD box helicase family. DDX5/DBP2 subfamily.

It is found in the nucleus. The protein resides in the nucleolus. The catalysed reaction is ATP + H2O = ADP + phosphate + H(+). In terms of biological role, ATP-dependent RNA helicase required for 60S ribosomal subunit synthesis. Involved in efficient pre-rRNA processing, predominantly at site A3, which is necessary for the normal formation of 25S and 5.8S rRNAs. The protein is ATP-dependent RNA helicase dbp3 (dbp3) of Aspergillus niger (strain ATCC MYA-4892 / CBS 513.88 / FGSC A1513).